A 302-amino-acid chain; its full sequence is Nodulation protein D 3 (302 aa).

The region spanning 6-63 is the HTH lysR-type domain; that stretch reads LDLNLLVALDALMIERNLTAAARSINLSQPAMSAAVRRLRSYFRDELFTMRGREFVPT. Residues 23-42 constitute a DNA-binding region (H-T-H motif); it reads LTAAARSINLSQPAMSAAVR.

This sequence belongs to the LysR transcriptional regulatory family.

In terms of biological role, nodD regulates the expression of the nodABCFE genes which encode other nodulation proteins. NodD is also a negative regulator of its own expression. Binds flavonoids as inducers. The polypeptide is Nodulation protein D 3 (nodD3) (Rhizobium leguminosarum bv. phaseoli).